Consider the following 36-residue polypeptide: Photosystem I reaction center subunit VIII (36 aa).

A helical transmembrane segment spans residues Ile-9–Tyr-29.

The protein belongs to the PsaI family.

It is found in the plastid. The protein resides in the chloroplast thylakoid membrane. In terms of biological role, may help in the organization of the PsaL subunit. The sequence is that of Photosystem I reaction center subunit VIII from Zygnema circumcarinatum (Green alga).